The chain runs to 437 residues: Phosphomethylpyrimidine synthase (437 aa).

Substrate contacts are provided by residues N69, M98, Y127, H163, 185 to 187 (SRG), 226 to 229 (DACR), and E265. Residue H269 participates in Zn(2+) binding. Y292 contributes to the substrate binding site. A Zn(2+)-binding site is contributed by H333. 3 residues coordinate [4Fe-4S] cluster: C409, C412, and C416.

This sequence belongs to the ThiC family. [4Fe-4S] cluster serves as cofactor.

It catalyses the reaction 5-amino-1-(5-phospho-beta-D-ribosyl)imidazole + S-adenosyl-L-methionine = 4-amino-2-methyl-5-(phosphooxymethyl)pyrimidine + CO + 5'-deoxyadenosine + formate + L-methionine + 3 H(+). Its pathway is cofactor biosynthesis; thiamine diphosphate biosynthesis. Its function is as follows. Catalyzes the synthesis of the hydroxymethylpyrimidine phosphate (HMP-P) moiety of thiamine from aminoimidazole ribotide (AIR) in a radical S-adenosyl-L-methionine (SAM)-dependent reaction. The polypeptide is Phosphomethylpyrimidine synthase (Clostridium botulinum (strain 657 / Type Ba4)).